A 372-amino-acid polypeptide reads, in one-letter code: Fork head domain-containing protein FD4 (372 aa).

The fork-head DNA-binding region spans glutamine 12–leucine 103. Disordered stretches follow at residues glutamate 225–aspartate 245 and proline 261–aspartate 281.

Expressed in early embryogenesis in 14 symmetrical pairs of segmentally arranged neuroblasts. Also, later in embryogenesis, in a cluster of cells in head region.

Its subcellular location is the nucleus. Involved in development during embryogenesis. The chain is Fork head domain-containing protein FD4 (fd96Ca) from Drosophila melanogaster (Fruit fly).